Here is a 261-residue protein sequence, read N- to C-terminus: Putative cytochrome YdhU (261 aa).

Residues 25 to 45 (FWPVWLIIAGVLLVGMWLVLG) traverse the membrane as a helical segment. A heme b-binding site is contributed by His-77. Helical transmembrane passes span 81–101 (ALLF…MVGA), 108–128 (VAVH…FVLI), and 182–202 (VAYV…GLLC). Position 111 (His-111) interacts with heme b. Heme b-binding residues include His-223 and His-237. A helical membrane pass occupies residues 224–244 (FALAFISLFFIFGHLYLCTTG). His-237 serves as a coordination point for a menaquinone.

This sequence belongs to the PhsC family. It depends on heme as a cofactor.

The protein localises to the cell inner membrane. This chain is Putative cytochrome YdhU (ydhU), found in Escherichia coli (strain K12).